We begin with the raw amino-acid sequence, 374 residues long: Guanine nucleotide-binding protein subunit alpha-15 (374 aa).

Positions 41–374 constitute a G-alpha domain; sequence EELKLLLLGP…ARYLDEINLL (334 aa). The G1 motif stretch occupies residues 44-57; sequence KLLLLGPGESGKST. GTP is bound by residues 49–56, 183–189, 208–212, 277–280, and A346; these read GPGESGKS, LRSRMPT, DVGGQ, and NKTD. 2 residues coordinate Mg(2+): S56 and T189. The segment at 181–189 is G2 motif; it reads DVLRSRMPT. The segment at 204-213 is G3 motif; that stretch reads LRIVDVGGQR. Positions 273–280 are G4 motif; sequence ILFLNKTD. Residues 344–349 form a G5 motif region; sequence TCATDT.

The protein belongs to the G-alpha family. G(q) subfamily. G proteins are composed of 3 units; alpha, beta and gamma. The alpha chain contains the guanine nucleotide binding site. In terms of tissue distribution, expressed primarily in hematopoietic cells. Coexpressed with EDG6 at the same relative levels in all tissues examined, with the highest levels in adult spleen and lung.

Guanine nucleotide-binding proteins (G proteins) are involved as modulators or transducers in various transmembrane signaling systems. The polypeptide is Guanine nucleotide-binding protein subunit alpha-15 (Gna15) (Mus musculus (Mouse)).